Here is a 43-residue protein sequence, read N- to C-terminus: Potassium channel toxin gamma-KTx 3.3 (43 aa).

4 cysteine pairs are disulfide-bonded: cysteine 5–cysteine 23, cysteine 11–cysteine 34, cysteine 20–cysteine 39, and cysteine 24–cysteine 41.

The protein belongs to the ergtoxin family. Gamma-KTx 3 subfamily. As to expression, expressed by the venom gland.

It is found in the secreted. Its function is as follows. Blocks Kv11/ERG potassium channels. The polypeptide is Potassium channel toxin gamma-KTx 3.3 (Centruroides sculpturatus (Arizona bark scorpion)).